Consider the following 186-residue polypeptide: Ribosome-recycling factor (186 aa).

It belongs to the RRF family.

The protein resides in the cytoplasm. Responsible for the release of ribosomes from messenger RNA at the termination of protein biosynthesis. May increase the efficiency of translation by recycling ribosomes from one round of translation to another. This chain is Ribosome-recycling factor, found in Chlorobium chlorochromatii (strain CaD3).